A 173-amino-acid chain; its full sequence is Protein tyrosine phosphatase type IVA 3 (173 aa).

The region spanning 8-161 is the Tyrosine-protein phosphatase domain; sequence APVEVSYKNM…YRPKQRLRFK (154 aa). C49 and C104 form a disulfide bridge. D72 (proton donor) is an active-site residue. The active-site Phosphocysteine intermediate is the C104. R110 serves as a coordination point for substrate. Residue C170 is modified to Cysteine methyl ester. C170 carries the S-farnesyl cysteine lipid modification. Residues 171–173 constitute a propeptide, removed in mature form; it reads CIM.

It belongs to the protein-tyrosine phosphatase family. Interacts with tubulin. Farnesylated. Farnesylation is required for membrane targeting. Unfarnesylated forms are shifted into the nucleus.

It localises to the cell membrane. It is found in the early endosome. It carries out the reaction O-phospho-L-tyrosyl-[protein] + H2O = L-tyrosyl-[protein] + phosphate. With respect to regulation, inhibited by sodium orthovanadate and peroxovanadium compounds, and by pentamidine. In terms of biological role, protein tyrosine phosphatase which stimulates progression from G1 into S phase during mitosis. Enhances cell proliferation, cell motility and invasive activity, and promotes cancer metastasis. May be involved in the progression of cardiac hypertrophy by inhibiting intracellular calcium mobilization in response to angiotensin II. The sequence is that of Protein tyrosine phosphatase type IVA 3 (PTP4A3) from Bos taurus (Bovine).